The chain runs to 139 residues: Putative nickel-responsive regulator (139 aa).

Positions 79, 90, 92, and 98 each coordinate Ni(2+).

Belongs to the transcriptional regulatory CopG/NikR family. Ni(2+) is required as a cofactor.

Its function is as follows. Transcriptional regulator. The sequence is that of Putative nickel-responsive regulator from Trichlorobacter lovleyi (strain ATCC BAA-1151 / DSM 17278 / SZ) (Geobacter lovleyi).